The following is a 235-amino-acid chain: Lipoprotein-releasing system ATP-binding protein LolD (235 aa).

The region spanning 13 to 235 (LCCSNIIKRY…SNGMLKISTI (223 aa)) is the ABC transporter domain. Position 49-56 (49-56 (GASGSGKS)) interacts with ATP.

It belongs to the ABC transporter superfamily. Lipoprotein translocase (TC 3.A.1.125) family. In terms of assembly, the complex is composed of two ATP-binding proteins (LolD) and two transmembrane proteins (LolC and LolE).

The protein localises to the cell inner membrane. Functionally, part of the ABC transporter complex LolCDE involved in the translocation of mature outer membrane-directed lipoproteins, from the inner membrane to the periplasmic chaperone, LolA. Responsible for the formation of the LolA-lipoprotein complex in an ATP-dependent manner. This Blochmanniella floridana protein is Lipoprotein-releasing system ATP-binding protein LolD.